Here is a 494-residue protein sequence, read N- to C-terminus: 3-octaprenyl-4-hydroxybenzoate carboxy-lyase (494 aa).

Asn172 is a Mn(2+) binding site. Residues 175-177 (IYR), 189-191 (RWL), and 194-195 (RG) contribute to the prenylated FMN site. Glu238 contacts Mn(2+). Asp287 acts as the Proton donor in catalysis.

The protein belongs to the UbiD family. In terms of assembly, homohexamer. Prenylated FMN is required as a cofactor. Requires Mn(2+) as cofactor.

It localises to the cell membrane. It carries out the reaction a 4-hydroxy-3-(all-trans-polyprenyl)benzoate + H(+) = a 2-(all-trans-polyprenyl)phenol + CO2. It participates in cofactor biosynthesis; ubiquinone biosynthesis. Catalyzes the decarboxylation of 3-octaprenyl-4-hydroxy benzoate to 2-octaprenylphenol, an intermediate step in ubiquinone biosynthesis. The protein is 3-octaprenyl-4-hydroxybenzoate carboxy-lyase of Escherichia coli O9:H4 (strain HS).